The sequence spans 189 residues: Ribosomal RNA large subunit methyltransferase E (189 aa).

Residues Gly-45, Phe-47, Asp-64, Asp-82, and Asp-104 each coordinate S-adenosyl-L-methionine. Lys-144 (proton acceptor) is an active-site residue.

It belongs to the class I-like SAM-binding methyltransferase superfamily. RNA methyltransferase RlmE family.

Its subcellular location is the cytoplasm. The catalysed reaction is uridine(2552) in 23S rRNA + S-adenosyl-L-methionine = 2'-O-methyluridine(2552) in 23S rRNA + S-adenosyl-L-homocysteine + H(+). Functionally, specifically methylates the uridine in position 2552 of 23S rRNA at the 2'-O position of the ribose in the fully assembled 50S ribosomal subunit. This is Ribosomal RNA large subunit methyltransferase E from Borreliella afzelii (strain PKo) (Borrelia afzelii).